The following is a 464-amino-acid chain: MDYDFKVKLTGERERVEDLFEYEGCKVGRGTYGHVYKAKRKDGRDDRDYALKQIEGTGISMSACREIALLRELKHPNVISLQKVFLSHADRKVWLLFDFAEHDLWHIIKFHRASKANKKPVQLPRGMVKSLLYQILDGIHYLHANWVLHRDLKPANILVMGEGPERGRVKIADMGFARLFNSPLKPLADLDPVVVTFWYRAPELLLGARHYTKAIDIWAIGCIFAELLTSEPIFHCRQEDIKTSNPYHHDQLDRIFNVMGFPADKDWEDIKKMPEHSTLIKDFRRNTYTNCSLIKYMEKHKVKPDSKTFHLLQKLLTMDPIKRISSEQAMQDPYFLEDPLPTSDVFAGCQIPYPKREFLTEEEPDDKGDKKNQQQQQGNNHTNGTGHPGNQDNSHAQGPPLKKVRVVPPTTTSGGLIMTSDYQRSNPHAAYQNPGPSTSQPQSSMGYSSTSQQPPQYSHQTHRY.

The interval 1–15 (MDYDFKVKLTGERER) is interaction with CCNC. A Protein kinase domain is found at 21 to 335 (EYEGCKVGRG…SEQAMQDPYF (315 aa)). Residues 27–35 (VGRGTYGHV) and lysine 52 contribute to the ATP site. Residue aspartate 151 is the Proton acceptor of the active site. Positions 361–464 (EEEPDDKGDK…PQYSHQTHRY (104 aa)) are disordered. Over residues 373 to 391 (QQQQQGNNHTNGTGHPGNQ) the composition is skewed to low complexity. Composition is skewed to polar residues over residues 409-426 (PTTT…QRSN) and 434-446 (PGPS…SSMG). Low complexity predominate over residues 447–464 (YSSTSQQPPQYSHQTHRY).

Belongs to the protein kinase superfamily. CMGC Ser/Thr protein kinase family. CDC2/CDKX subfamily. In terms of assembly, component of the Mediator complex. Interacts with ccnc. Mg(2+) serves as cofactor.

Its subcellular location is the nucleus. It catalyses the reaction L-seryl-[protein] + ATP = O-phospho-L-seryl-[protein] + ADP + H(+). The enzyme catalyses L-threonyl-[protein] + ATP = O-phospho-L-threonyl-[protein] + ADP + H(+). It carries out the reaction [DNA-directed RNA polymerase] + ATP = phospho-[DNA-directed RNA polymerase] + ADP + H(+). Functionally, component of the Mediator complex, a coactivator involved in regulated gene transcription of nearly all RNA polymerase II-dependent genes. Mediator functions as a bridge to convey information from gene-specific regulatory proteins to the basal RNA polymerase II transcription machinery. Mediator is recruited to promoters by direct interactions with regulatory proteins and serves as a scaffold for the assembly of a functional pre-initiation complex with RNA polymerase II and the general transcription factors. Phosphorylates the CTD (C-terminal domain) of the large subunit of RNA polymerase II (RNAp II), which may inhibit the formation of a transcription initiation complex. This Xenopus tropicalis (Western clawed frog) protein is Cyclin-dependent kinase 8 (cdk8).